We begin with the raw amino-acid sequence, 215 residues long: Adenylate kinase (215 aa).

Position 10–15 (10–15 (GAGKGT)) interacts with ATP. An NMP region spans residues 30 to 59 (STGDILRENVKNETELGKKAKEYMDKGLLV). Residues Thr-31, Arg-36, 57 to 59 (LLV), 85 to 88 (GFPR), and Gln-92 each bind AMP. The LID stretch occupies residues 126-163 (GRRICKNCGASFHVIYRPPQKEGVCDVCGGELYQREDD). ATP is bound at residue Arg-127. Zn(2+) is bound by residues Cys-130 and Cys-133. 136–137 (SF) provides a ligand contact to ATP. Residues Cys-150 and Cys-153 each coordinate Zn(2+). The AMP site is built by Arg-160 and Arg-171. Residue Gln-198 coordinates ATP.

The protein belongs to the adenylate kinase family. Monomer.

It is found in the cytoplasm. The enzyme catalyses AMP + ATP = 2 ADP. It participates in purine metabolism; AMP biosynthesis via salvage pathway; AMP from ADP: step 1/1. In terms of biological role, catalyzes the reversible transfer of the terminal phosphate group between ATP and AMP. Plays an important role in cellular energy homeostasis and in adenine nucleotide metabolism. This chain is Adenylate kinase, found in Caldicellulosiruptor bescii (strain ATCC BAA-1888 / DSM 6725 / KCTC 15123 / Z-1320) (Anaerocellum thermophilum).